The primary structure comprises 298 residues: Protoheme IX farnesyltransferase (298 aa).

A run of 9 helical transmembrane segments spans residues 19–39 (VMSLVVFTAFVGLWIAPQPVN), 40–60 (PFVAFCAVLFIALGGGASGAL), 91–111 (LAVGIALSGLSVMMLGAGGNW), 112–132 (FAAGFLAFTIFFYAVVYTIWL), 140–160 (IVIGGAAGAFPPMIGWALPTG), 167–187 (LLMFALIFFWTPPHFWALALF), 213–233 (IFAYTLVLAPFALWLGFTSVG), 236–256 (LYLAVSVVLNALFIAGGWQIL), and 277–297 (LSLYYTFLHFLALLVQHWVGG).

This sequence belongs to the UbiA prenyltransferase family. Protoheme IX farnesyltransferase subfamily. As to quaternary structure, interacts with CtaA.

It is found in the cell inner membrane. It catalyses the reaction heme b + (2E,6E)-farnesyl diphosphate + H2O = Fe(II)-heme o + diphosphate. The protein operates within porphyrin-containing compound metabolism; heme O biosynthesis; heme O from protoheme: step 1/1. Converts heme B (protoheme IX) to heme O by substitution of the vinyl group on carbon 2 of heme B porphyrin ring with a hydroxyethyl farnesyl side group. The chain is Protoheme IX farnesyltransferase from Paracoccus denitrificans.